Reading from the N-terminus, the 317-residue chain is Protease HtpX homolog (317 aa).

2 helical membrane-spanning segments follow: residues 14–34 (LMGIAIFAIGFGIIYAILYYI) and 41–61 (IALLMVLLPIFIIMDIVQWLF). A Zn(2+)-binding site is contributed by H146. E147 is a catalytic residue. H150 is a Zn(2+) binding site. Transmembrane regions (helical) follow at residues 158–178 (MLLAIGLIPTLIFYFGYTLLF) and 189–209 (IVLLAIIAMAASFLFRFLILA). E215 contributes to the Zn(2+) binding site.

It belongs to the peptidase M48B family. It depends on Zn(2+) as a cofactor.

Its subcellular location is the cell membrane. The polypeptide is Protease HtpX homolog (Thermoplasma acidophilum (strain ATCC 25905 / DSM 1728 / JCM 9062 / NBRC 15155 / AMRC-C165)).